The following is a 308-amino-acid chain: MAKHQSVLLHESIKGLAIKADGIYFDGTFGRGGHSREILNHLSDKGRLFAIDKDLDAVQYAKDYFGLDKRFQIFHGSFAQIKEFASQAGVIGAVDGILLDLGVSSPQLDNPERGFSFMLQGPLDMRMDLTQSINAANFVNEAEVNELAHVFRAYGEERFAGRIAKAIVDARKLKPITTTLELAEIVKEANPKWEKHKHPATRVFQAIRIHVNQELTDLSNCLEQCLDVLGPGGRLAVISFHSLEDRIVKQFMRDKEQGNRPPVEVPIKYEELKTNFKKVGKAVKPQSSEIKENVRSRSAVLRIGEKLA.

Residues G32–H34, D52, F78, D100, and Q107 each bind S-adenosyl-L-methionine.

This sequence belongs to the methyltransferase superfamily. RsmH family.

It localises to the cytoplasm. The enzyme catalyses cytidine(1402) in 16S rRNA + S-adenosyl-L-methionine = N(4)-methylcytidine(1402) in 16S rRNA + S-adenosyl-L-homocysteine + H(+). Specifically methylates the N4 position of cytidine in position 1402 (C1402) of 16S rRNA. In Legionella pneumophila (strain Paris), this protein is Ribosomal RNA small subunit methyltransferase H.